A 699-amino-acid chain; its full sequence is Extracellular matrix protein 2 (699 aa).

An N-terminal signal peptide occupies residues 1-20 (MKIAVLFCFFLLIIFQTDFG). A VWFC domain is found at 101–158 (GHCLVKGITMYNKAVWSPEPCTTCLCSDGRVLCDETMCHPQRCPQTVIPEGECCPVCS). Basic and acidic residues predominate over residues 176–186 (EFSGDSSEQRE). Residues 176–316 (EFSGDSSEQR…PAPPRGTLRL (141 aa)) are disordered. The segment covering 212–224 (QSEEDEEVKEEDT) has biased composition (acidic residues). Over residues 243–260 (GDSRGGDRKQRPGEERRL) the composition is skewed to basic and acidic residues. The span at 270–291 (EEEEDEEEEGEEGEEDEEDEED) shows a compositional bias: acidic residues. A Cell attachment site motif is present at residues 294–296 (RGD). The region spanning 307-344 (PAPPRGTLRLPSGCSLSYRTISCINAMLTQIPPLTAPQ) is the LRRNT domain. 13 LRR repeats span residues 368 to 388 (NLER…GPKA), 394 to 415 (KLMR…LPST), 416 to 436 (LEEL…SLSD), 439 to 459 (QLVT…NPLA), 465 to 484 (SLAY…QGLP), 486 to 507 (SIEE…CFNH), 510 to 530 (KINV…APLA), 536 to 557 (NLES…LPKS), 558 to 578 (LLHL…VFGH), 582 to 602 (GLEY…DRVS), 609 to 630 (SLRE…IQEM), 632 to 653 (ALHF…EICN), and 661 to 684 (NLEH…TFSC). A glycan (N-linked (GlcNAc...) asparagine) is linked at Asn-378. N-linked (GlcNAc...) asparagine glycosylation occurs at Asn-449. Asn-506 is a glycosylation site (N-linked (GlcNAc...) asparagine).

The protein belongs to the small leucine-rich proteoglycan (SLRP) family. SLRP class I subfamily. As to quaternary structure, interacts with numerous extracellular matrix proteins. Interacts with MSL1 and RASSF1. As to expression, expressed predominantly in adipose tissue as well as female-specific organs such as mammary gland, ovary, and uterus.

It is found in the secreted. It localises to the extracellular space. The protein resides in the extracellular matrix. Its function is as follows. Promotes matrix assembly and cell adhesiveness. In Homo sapiens (Human), this protein is Extracellular matrix protein 2 (ECM2).